Reading from the N-terminus, the 1606-residue chain is MSEDSRGDSRAESAKDLEKQLRLRVCVLSELQKTERDYVGTLEFLVSAFLHRMNQCAASKVDKNVTEETVKMLFSNIEDILAVHKEFLKVVEECLHPEPNAQQEVGTCFLHFKDKFRIYDEYCSNHEKAQKLLLELNKIRTIRTFLLNCMLLGGRKNTDVPLEGYLVTPIQRICKYPLILKELLKRTPRKHSDYAAVMEALQAMKAVCSNINEAKRQMEKLEVLEEWQSHIEGWEGSNITDTCTEMLMCGVLLKISSGNIQERVFFLFDNLLVYCKRKHRRLKNSKASTDGHRYLFRGRINTEVMEVENVDDGTADFHSSGHIVVNGWKIHNTAKNKWFVCMAKTPEEKHEWFEAILKERERRKGLKLGMEQDTWVMISEQGEKLYKMMCRQGNLIKDRKRKLTTFPKCFLGSEFVSWLLEIGEIHRPEEGVHLGQALLENGIIHHVTDKHQFKPEQMLYRFRYDDGTFYPRNEMQDVISKGVRLYCRLHSLFTPVIRDKDYHLRTYKSVVMANKLIDWLIAQGDCRTREEAMIFGVGLCDNGFMHHVLEKSEFKDEPLLFRFFSDEEMEGSNMKHRLMKHDLKVVENVIAKSLLIKSNEGSYGFGLEDKNKVPIIKLVEKGSNAEMAGMEVGKKIFAINGDLVFMRPFNEVDCFLKSCLNSRKPLRVLVSTKPRETVKIPDSADGLGFQIRGFGPSVVHAVGRGTVAAAAGLHPGQCIIKVNGINVSKETHASVIAHVTACRKYRRPTKQDSIQWVYNSIESAQEDLQKSHSKPPGDEAGDAFDCKVEEVIDKFNTMAIIDGKKEHVSLTVDNVHLEYGVVYEYDSTAGIKCNVVEKMIEPKGFFSLTAKILEALAKSDEHFVQNCTSLNSLNEVIPTDLQSKFSALCSERIEHLCQRISSYKKFSRVLKNRAWPTFKQAKSKISPLHSSDFCPTNCHVNVMEVSYPKTSTSLGSAFGVQLDSRKHNSHDKENKSSEQGKLSPMVYIQHTITTMAAPSGLSLGQQDGHGLRYLLKEEDLETQDIYQKLLGKLQTALKEVEMCVCQIDDLLSSITYSPKLERKTSEGIIPTDSDNEKGERNSKRVCFNVAGDEQEDSGHDTISNRDSYSDCNSNRNSIASFTSICSSQCSSYFHSDEMDSGDELPLSVRISHDKQDKIHSCLEHLFSQVDSITNLLKGQAVVRAFDQTKYLTPGRGLQEFQQEMEPKLSCPKRLRLHIKQDPWNLPSSVRTLAQNIRKFVEEVKCRLLLALLEYSDSETQLRRDMVFCQTLVATVCAFSEQLMAALNQMFDNSKENEMETWEASRRWLDQIANAGVLFHFQSLLSPNLTDEQAMLEDTLVALFDLEKVSFYFKPSEEEPLVANVPLTYQAEGSRQALKVYFYIDSYHFEQLPQRLKNGGGFKIHPVLFAQALESMEGYYYRDNVSVEEFQAQINAASLEKVKQYNQKLRAFYLDKSNSPPNSTSKAAYVDKLMRPLNALDELYRLVASFIRSKRTAACANTACSASGVGLLSVSSELCNRLGACHIIMCSSGVHRCTLSVTLEQAIILARSHGLPPRYIMQATDVMRKQGARVQNTAKNLGVRDRTPQSAPRLYKLCEPPPPAGEE.

The 192-residue stretch at 23–214 (LRVCVLSELQ…KAVCSNINEA (192 aa)) folds into the DH domain. In terms of domain architecture, PH spans 245 to 361 (EMLMCGVLLK…WFEAILKERE (117 aa)). 2 DEP domains span residues 390–464 (CRQG…RFRY) and 491–566 (SLFT…FFSD). PDZ domains are found at residues 592–671 (KSLL…VLVS) and 677–754 (TVKI…QDSI). The segment at 1581 to 1606 (GVRDRTPQSAPRLYKLCEPPPPAGEE) is disordered.

Interacts with RAC1. As to expression, isoform 1 is highly expressed in skeletal muscle, heart and placenta, absent from peripheral blood leukocytes. Isoform 2 is expressed in skeletal muscle, kidney, small intestine, and placenta. Isoform 3 is expressed in the heart.

Functionally, functions as a RAC1 guanine nucleotide exchange factor (GEF), activating Rac proteins by exchanging bound GDP for free GTP. Its activity is synergistically activated by phosphatidylinositol 3,4,5-trisphosphate and the beta gamma subunits of heterotrimeric G protein. Mediates the activation of RAC1 in a PI3K-dependent manner. May be an important mediator of Rac signaling, acting directly downstream of both G protein-coupled receptors and phosphoinositide 3-kinase. The polypeptide is Phosphatidylinositol 3,4,5-trisphosphate-dependent Rac exchanger 2 protein (Homo sapiens (Human)).